The primary structure comprises 523 residues: Tubulin-specific chaperone E (523 aa).

Residues 31–75 (GEVSGHMGSWLGIEWDDGLRGKHNGIVDGKRYFQTQTPTGGSFIR) enclose the CAP-Gly domain. LRR repeat units follow at residues 155-180 (LTHLTTLNVSHTLIWNWEIVASIAQQ), 181-204 (LPSLTNLNLSSNRLVLPTSSQITE), 209-232 (FRQLKRINLRSCGFSDWKDVMHTA), 235-258 (WPNILSLGLQENSLGQLAEVDRTK), 260-284 (FKQLHELDLHRTNIMDFDQVTKLGN), 285-310 (LTTLRLLNIMENGIEEIKLPDCDSQE), and 315-337 (FVSLEQLNLLHNPIWNEADAFNE).

The protein belongs to the TBCE family.

It localises to the cytoplasm. Functionally, tubulin-folding protein which is required for the development of the neuronal microtubule network. Essential for the development and function of neuromuscular synapses. Likely to promote microtubule formation by acting in the negative regulation of the microtubule-severing protein spas. The protein is Tubulin-specific chaperone E of Drosophila melanogaster (Fruit fly).